We begin with the raw amino-acid sequence, 125 residues long: MAERVARLSSQRAVVIFGASNCFMCHVVKTLFSELGVSWAVHEVDKDPNGKDVERALAGMVGRTPPVPAVFIGGKLVGPTDQVMSLHLAGKLVPLLREAGALWLRDTKYSYILPANQLINYRSIN.

Positions 2–103 constitute a Glutaredoxin domain; sequence AERVARLSSQ…PLLREAGALW (102 aa). An intrachain disulfide couples C22 to C25.

The protein belongs to the glutaredoxin family. CC-type subfamily.

The protein resides in the cytoplasm. Functionally, has a glutathione-disulfide oxidoreductase activity in the presence of NADPH and glutathione reductase. Reduces low molecular weight disulfides and proteins. The chain is Putative glutaredoxin-C2 (GRXC2) from Oryza sativa subsp. japonica (Rice).